The primary structure comprises 223 residues: Serine/threonine/tyrosine-interacting protein (223 aa).

Positions 28-176 (EMQEILPGLF…LQEYEAIYLA (149 aa)) constitute a Tyrosine-protein phosphatase domain. An Interaction with FBXW7 motif is present at residues 76–78 (FQQ). Phosphoserine is present on residues serine 184, serine 193, and serine 201. Residues 197–223 (GTTGSLKRTHEEEDDFGTMQVATAQNG) form a disordered region.

Belongs to the protein-tyrosine phosphatase family. Non-receptor class subfamily. In terms of assembly, interacts with MAPK1; independently of MAPK1 phosphorylation status. Interacts with CARHSP1/Crhsp-24. Interacts (via FQQ motif) with FBXW7 (via F-box domain); the interaction is direct and prevents FBXW7 interaction with SKP1, a component of the SCF(FBXW7) complex.

Its subcellular location is the nucleus. The protein resides in the cytoplasm. It localises to the cytosol. Catalytically inactive phosphatase. Acts as a nuclear anchor for MAPK1/MAPK3 (ERK1/ERK2). Modulates cell-fate decisions and cell migration by spatiotemporal regulation of MAPK1/MAPK3 (ERK1/ERK2). By binding to the F-box of FBXW7, prevents the assembly of FBXW7 into the SCF E3 ubiquitin-protein ligase complex, and thereby inhibits degradation of its substrates. Plays a role in spermatogenesis. This chain is Serine/threonine/tyrosine-interacting protein (STYX), found in Pongo abelii (Sumatran orangutan).